The following is a 78-amino-acid chain: Large ribosomal subunit protein uL29 (78 aa).

The protein belongs to the universal ribosomal protein uL29 family.

The protein is Large ribosomal subunit protein uL29 of Rhodococcus opacus (strain B4).